Consider the following 131-residue polypeptide: Sec-independent protein translocase protein TatB (131 aa).

Residues 2–22 traverse the membrane as a helical segment; the sequence is LGSLSWEHMLVLVVVGLVVLG. The tract at residues 96 to 131 is disordered; that stretch reads AFDRPVNGAAAQPPPAPAPPPEPHRPGQTPFDADAT. The span at 107–116 shows a compositional bias: pro residues; that stretch reads QPPPAPAPPP.

The protein belongs to the TatB family. The Tat system comprises two distinct complexes: a TatABC complex, containing multiple copies of TatA, TatB and TatC subunits, and a separate TatA complex, containing only TatA subunits. Substrates initially bind to the TatABC complex, which probably triggers association of the separate TatA complex to form the active translocon.

It is found in the cell membrane. Part of the twin-arginine translocation (Tat) system that transports large folded proteins containing a characteristic twin-arginine motif in their signal peptide across membranes. Together with TatC, TatB is part of a receptor directly interacting with Tat signal peptides. TatB may form an oligomeric binding site that transiently accommodates folded Tat precursor proteins before their translocation. This Mycobacterium avium (strain 104) protein is Sec-independent protein translocase protein TatB.